The following is a 218-amino-acid chain: Large ribosomal subunit protein uL3 (218 aa).

A disordered region spans residues Gly127–Gly167.

Belongs to the universal ribosomal protein uL3 family. Part of the 50S ribosomal subunit. Forms a cluster with proteins L14 and L19.

One of the primary rRNA binding proteins, it binds directly near the 3'-end of the 23S rRNA, where it nucleates assembly of the 50S subunit. This chain is Large ribosomal subunit protein uL3, found in Prochlorococcus marinus (strain MIT 9303).